Consider the following 546-residue polypeptide: Pectinesterase 1 (546 aa).

Positions 1–39 are cleaved as a signal peptide; the sequence is MANPQQPLLIKTHKQNPIISFKILSFVITLFVALFLVAP. A propeptide spanning residues 40-229 is cleaved from the precursor; it reads YQVEIKHSNL…RKLMESSGKD (190 aa). Substrate contacts are provided by Thr308 and Gln338. A disulfide bridge connects residues Cys327 and Cys354. Residue Asp361 is the Proton donor of the active site. Residue Asp382 is the Nucleophile of the active site. Cys395 and Cys429 form a disulfide bridge. The substrate site is built by Arg450 and Trp452.

The protein in the N-terminal section; belongs to the PMEI family. It in the C-terminal section; belongs to the pectinesterase family.

The protein resides in the secreted. It is found in the cell wall. The enzyme catalyses [(1-&gt;4)-alpha-D-galacturonosyl methyl ester](n) + n H2O = [(1-&gt;4)-alpha-D-galacturonosyl](n) + n methanol + n H(+). It participates in glycan metabolism; pectin degradation; 2-dehydro-3-deoxy-D-gluconate from pectin: step 1/5. Functionally, pectinesterase may play a role in cell wall metabolism during fruit growth and development prior to ripening and may be required for preparing cell walls for softening by polygalacturonase during fruit ripening. This Solanum lycopersicum (Tomato) protein is Pectinesterase 1 (PME1.9).